Consider the following 649-residue polypeptide: Acetyl-coenzyme A synthetase (649 aa).

CoA is bound by residues 191 to 194 (RGGR), Thr312, and Asn336. Residues 388–390 (GEP), 412–417 (DTWWQT), Asp501, and Arg516 each bind ATP. A CoA-binding site is contributed by Ser524. Residue Arg527 coordinates ATP. Val538, His540, and Val543 together coordinate Mg(2+). Arg585 is a CoA binding site. The residue at position 610 (Lys610) is an N6-acetyllysine.

Belongs to the ATP-dependent AMP-binding enzyme family. Mg(2+) serves as cofactor. In terms of processing, acetylated. Deacetylation by the SIR2-homolog deacetylase activates the enzyme.

The catalysed reaction is acetate + ATP + CoA = acetyl-CoA + AMP + diphosphate. Catalyzes the conversion of acetate into acetyl-CoA (AcCoA), an essential intermediate at the junction of anabolic and catabolic pathways. AcsA undergoes a two-step reaction. In the first half reaction, AcsA combines acetate with ATP to form acetyl-adenylate (AcAMP) intermediate. In the second half reaction, it can then transfer the acetyl group from AcAMP to the sulfhydryl group of CoA, forming the product AcCoA. The sequence is that of Acetyl-coenzyme A synthetase from Marinobacter nauticus (strain ATCC 700491 / DSM 11845 / VT8) (Marinobacter aquaeolei).